Reading from the N-terminus, the 532-residue chain is MQFFAKQNCQVNLLTNNPSSNPRFIMEINSAATLTLVSLLTLPILLALLTRKSSSKKRRPPGPWNLPLVGGLLHLLRSHPQVALRELASKYGPVMFLRMGQIDTVVVSSPAAAQEVLRDKDVMFASRPSLLVSEIFCYDNLDVGFAPYGAYWRMLRKLCTVELLSTKVVRQLAPVRNDETLTLVRNIKAASSGHGGGGGKKPVTLARLLTTCTNTITAKAAFGQACGVELQEQFLTALDVGLKFSGGFCFGDLFPSLRFIDAMTGLRSRLWRARGQLDSVFDKIIAQCEEHQGDSLVNVLLRIRDQGDLEFPFGTTNIKAIILDMFTGGTETTSSAAEWVMSELMRNPEVMAKVQAEVRRVFDNKSPQDHEGLIDNLRYMKMVIKETMRLNPVLPLLMPHLCRETCDIGGYEVVEGTRVVINSWAMARSPEYWDDAEEFKPERFEDGMADYKGSRFEYLPFGTGRRRCPGDTFGMVLLELIVARLLYYFDWSLPAGMQPDDVDMDFVVTATTRRKNHLQLVASPYKLAPIQI.

Residues 30–50 (SAATLTLVSLLTLPILLALLT) traverse the membrane as a helical segment. Cysteine 468 serves as a coordination point for heme. Residues 473–493 (FGMVLLELIVARLLYYFDWSL) traverse the membrane as a helical segment.

Belongs to the cytochrome P450 family. The cofactor is heme.

The protein resides in the membrane. Involved in momilactone phytoalexins biosynthesis. Participates in the biosynthetic steps between 9-beta-pimara-7,15-diene and 3-beta-hydroxy-9-beta-pimara-7,15-dien-19,6-beta-olide. This is Cytochrome P450 99A2 (CYP99A2) from Oryza sativa subsp. japonica (Rice).